Consider the following 505-residue polypeptide: Putative thymidine phosphorylase (505 aa).

It belongs to the thymidine/pyrimidine-nucleoside phosphorylase family. Type 2 subfamily.

It catalyses the reaction thymidine + phosphate = 2-deoxy-alpha-D-ribose 1-phosphate + thymine. This Tolumonas auensis (strain DSM 9187 / NBRC 110442 / TA 4) protein is Putative thymidine phosphorylase.